Reading from the N-terminus, the 316-residue chain is CRISPR-associated endonuclease Cas1 (316 aa).

Positions 143, 206, and 221 each coordinate Mn(2+).

The protein belongs to the CRISPR-associated endonuclease Cas1 family. As to quaternary structure, homodimer, forms a heterotetramer with a Cas2 homodimer. Mg(2+) is required as a cofactor. The cofactor is Mn(2+).

Its function is as follows. CRISPR (clustered regularly interspaced short palindromic repeat), is an adaptive immune system that provides protection against mobile genetic elements (viruses, transposable elements and conjugative plasmids). CRISPR clusters contain spacers, sequences complementary to antecedent mobile elements, and target invading nucleic acids. CRISPR clusters are transcribed and processed into CRISPR RNA (crRNA). Acts as a dsDNA endonuclease. Involved in the integration of spacer DNA into the CRISPR cassette. This chain is CRISPR-associated endonuclease Cas1, found in Aquifex aeolicus (strain VF5).